A 129-amino-acid chain; its full sequence is Glycine cleavage system H protein (129 aa).

The Lipoyl-binding domain maps to 23–104 (SVTVGITQHA…CYAAWLFKLK (82 aa)). Lysine 64 bears the N6-lipoyllysine mark.

It belongs to the GcvH family. In terms of assembly, the glycine cleavage system is composed of four proteins: P, T, L and H. The cofactor is (R)-lipoate.

Its function is as follows. The glycine cleavage system catalyzes the degradation of glycine. The H protein shuttles the methylamine group of glycine from the P protein to the T protein. This Nitrosomonas europaea (strain ATCC 19718 / CIP 103999 / KCTC 2705 / NBRC 14298) protein is Glycine cleavage system H protein.